A 324-amino-acid polypeptide reads, in one-letter code: tRNA dimethylallyltransferase (324 aa).

17–24 (GPTASGKT) is an ATP binding site. 19-24 (TASGKT) lines the substrate pocket. Interaction with substrate tRNA regions lie at residues 42 to 45 (DSAL), 166 to 170 (QRIQR), and 251 to 256 (RCVGYR).

This sequence belongs to the IPP transferase family. As to quaternary structure, monomer. Mg(2+) serves as cofactor.

The enzyme catalyses adenosine(37) in tRNA + dimethylallyl diphosphate = N(6)-dimethylallyladenosine(37) in tRNA + diphosphate. In terms of biological role, catalyzes the transfer of a dimethylallyl group onto the adenine at position 37 in tRNAs that read codons beginning with uridine, leading to the formation of N6-(dimethylallyl)adenosine (i(6)A). This Burkholderia mallei (strain NCTC 10247) protein is tRNA dimethylallyltransferase.